The following is a 201-amino-acid chain: L(+)-tartrate dehydratase subunit beta (201 aa).

Residue H37 is part of the active site.

It belongs to the class-I fumarase family. As to quaternary structure, heterotetramer of two alpha and two beta subunits.

The catalysed reaction is (2R,3R)-tartrate = oxaloacetate + H2O. This Escherichia coli O6:K15:H31 (strain 536 / UPEC) protein is L(+)-tartrate dehydratase subunit beta (ttdB).